A 290-amino-acid chain; its full sequence is Fructose-1,6-bisphosphatase class 1 (290 aa).

Residues Glu78, Asp96, Leu98, and Asp99 each contribute to the Mg(2+) site. Residues 99-102 (DGSS), Tyr201, and Lys226 each bind substrate. Glu232 lines the Mg(2+) pocket.

Belongs to the FBPase class 1 family. As to quaternary structure, homotetramer. The cofactor is Mg(2+).

Its subcellular location is the cytoplasm. It catalyses the reaction beta-D-fructose 1,6-bisphosphate + H2O = beta-D-fructose 6-phosphate + phosphate. The protein operates within carbohydrate biosynthesis; gluconeogenesis. The protein is Fructose-1,6-bisphosphatase class 1 of Helicobacter pylori (strain ATCC 700392 / 26695) (Campylobacter pylori).